Consider the following 62-residue polypeptide: Large ribosomal subunit protein uL29 (62 aa).

The protein belongs to the universal ribosomal protein uL29 family.

This Desulfosudis oleivorans (strain DSM 6200 / JCM 39069 / Hxd3) (Desulfococcus oleovorans) protein is Large ribosomal subunit protein uL29.